The sequence spans 356 residues: MSKEPIIKLDNIDVTFHQKKREINAVKDVTIHINQGDIYGIVGYSGAGKSTLVRVINLLQEPSAGKITIDDQVIYDNKVTLTSTQLREQRREIGMIFQHFNLMSQLTAEQNVAFALKHSGLSKEAKAAKVAKLLELVGLSDRAQNYPSQLSGGQKQRVAIARALANDPKILISDESTSALDPKTTKQILALLQDLNKKLGLTIVLITHEMQIVKDIANRVAVMQNGKLIEEGSVLDIFSHPRESLTQDFIKIATGIDEAMLKIEQQEVVKNLPVGSKLVQLKYAGHSTDEPLLNQIYKEFEVTANILYGNIEILDGIPVGEMVVILSGDEEKLRQACQAITDSQVQLTLLKEGGKA.

In terms of domain architecture, ABC transporter spans 7-250 (IKLDNIDVTF…PRESLTQDFI (244 aa)). An ATP-binding site is contributed by 43-50 (GYSGAGKS).

This sequence belongs to the ABC transporter superfamily. Methionine importer (TC 3.A.1.24) family. As to quaternary structure, the complex is composed of two ATP-binding proteins (MetN), two transmembrane proteins (MetI) and a solute-binding protein (MetQ).

It localises to the cell membrane. It catalyses the reaction L-methionine(out) + ATP + H2O = L-methionine(in) + ADP + phosphate + H(+). The catalysed reaction is D-methionine(out) + ATP + H2O = D-methionine(in) + ADP + phosphate + H(+). Its function is as follows. Part of the ABC transporter complex MetNIQ involved in methionine import. Responsible for energy coupling to the transport system. This is Methionine import ATP-binding protein MetN from Streptococcus agalactiae serotype Ia (strain ATCC 27591 / A909 / CDC SS700).